The primary structure comprises 484 residues: Poly(A) polymerase alpha-B (484 aa).

Residues 240 to 257 (RKQLHQLLPSHVLPKKKK) carry the Nuclear localization signal 1 motif. Disordered stretches follow at residues 276-314 (SVDS…PVSL), 326-356 (VPQN…SSTP), and 375-484 (KPVT…RLNR). The short motif at 392 to 407 (KRTSSPTNEESPKKTK) is the Nuclear localization signal 2 element. A compositionally biased stretch (basic and acidic residues) spans 423–441 (EQNKLEPEELKEVHSEEKS). Positions 451-464 (SSQRSSSTDLSDIS) are enriched in low complexity.

Belongs to the poly(A) polymerase family. Monomer.

The protein resides in the nucleus. The enzyme catalyses RNA(n) + ATP = RNA(n)-3'-adenine ribonucleotide + diphosphate. Polymerase that creates the 3'-poly(A) tail of mRNA's. May acquire specificity through interaction with a cleavage and polyadenylation factor (CPSF). In Xenopus laevis (African clawed frog), this protein is Poly(A) polymerase alpha-B (papola-b).